Consider the following 382-residue polypeptide: V-set and immunoglobulin domain-containing protein 1 (382 aa).

Positions 1–21 (MGLTFWKVFLILNCLAGQVNG) are cleaved as a signal peptide. The 112-residue stretch at 22–133 (VQVTIPDSFV…FFGKNQGTIS (112 aa)) folds into the Ig-like V-type domain. The Extracellular portion of the chain corresponds to 22–234 (VQVTIPDSFV…DLTTPYPGIG (213 aa)). Residue asparagine 32 is glycosylated (N-linked (GlcNAc...) asparagine). Cystine bridges form between cysteine 43–cysteine 116 and cysteine 161–cysteine 211. An Ig-like C2-type domain is found at 140 to 227 (PSKPFCSIQG…GNSSCEIDLT (88 aa)). Asparagine 200 and asparagine 219 each carry an N-linked (GlcNAc...) asparagine glycan. Residues 235-255 (IIVGAFVGTLIGVIIIISVVW) traverse the membrane as a helical segment. The Cytoplasmic segment spans residues 256–382 (FVRRKVKAKG…FCDEEKVIKP (127 aa)). The interval 266–382 (KERKRNSKTT…FCDEEKVIKP (117 aa)) is disordered. The segment covering 273 to 285 (KTTTELEPMTKIN) has biased composition (polar residues). Residues 286 to 298 (QRTEGETMPREDA) are compositionally biased toward basic and acidic residues. Pro residues predominate over residues 327–341 (EPEPALQPTVEPPSG).

It is found in the membrane. This is V-set and immunoglobulin domain-containing protein 1 (VSIG1) from Bos taurus (Bovine).